We begin with the raw amino-acid sequence, 227 residues long: Orotidine 5'-phosphate decarboxylase (227 aa).

Substrate-binding positions include D8, K30, 58-67 (DLKVHDIPNT), T117, R177, Q186, G206, and R207. K60 functions as the Proton donor in the catalytic mechanism.

It belongs to the OMP decarboxylase family. Type 1 subfamily. As to quaternary structure, homodimer.

The catalysed reaction is orotidine 5'-phosphate + H(+) = UMP + CO2. Its pathway is pyrimidine metabolism; UMP biosynthesis via de novo pathway; UMP from orotate: step 2/2. Catalyzes the decarboxylation of orotidine 5'-monophosphate (OMP) to uridine 5'-monophosphate (UMP). This chain is Orotidine 5'-phosphate decarboxylase, found in Campylobacter fetus subsp. fetus (strain 82-40).